Reading from the N-terminus, the 56-residue chain is Prokaryotic ubiquitin-like protein UBact (56 aa).

Residues 1–28 are compositionally biased toward basic and acidic residues; it reads MPQDQQRKKQFDPNPNRDDSQRKTPVDK. The segment at 1–33 is disordered; that stretch reads MPQDQQRKKQFDPNPNRDDSQRKTPVDKEIDDI. Gln56 is subject to Deamidated glutamine. Gln56 participates in a covalent cross-link: Isoglutamyl lysine isopeptide (Gln-Lys) (interchain with K-? in acceptor proteins).

This sequence belongs to the ubiquitin-like protein UBact family. Post-translationally, may be modified by deamidation of its C-terminal glutamine to glutamate by the adjacently encoded deamidase. This could be a prerequisite to the subsequent conjugation, as shown in the other prokaryotic ubiquitin-like protein Pup.

May function as a protein modifier covalently attached to lysine residues of substrate proteins. This may serve to target the modified proteins for degradation by proteasomes. This is Prokaryotic ubiquitin-like protein UBact from Yanofskybacteria sp. (strain GW2011_GWA1_39_13).